A 779-amino-acid chain; its full sequence is Phosphoribosylformylglycinamidine synthase subunit PurL (779 aa).

Histidine 52 is an active-site residue. Residues tyrosine 55 and lysine 94 each contribute to the ATP site. A Mg(2+)-binding site is contributed by glutamate 96. Substrate is bound by residues 97-100 and arginine 119; that span reads SHNH. Residue histidine 98 is the Proton acceptor of the active site. Residue aspartate 120 coordinates Mg(2+). Residue glutamine 243 coordinates substrate. Aspartate 271 provides a ligand contact to Mg(2+). Substrate is bound at residue 315–317; sequence ESQ. ATP-binding residues include asparagine 523 and glycine 560. Position 561 (asparagine 561) interacts with Mg(2+). Position 563 (serine 563) interacts with substrate.

This sequence belongs to the FGAMS family. In terms of assembly, monomer. Part of the FGAM synthase complex composed of 1 PurL, 1 PurQ and 2 PurS subunits.

It is found in the cytoplasm. It carries out the reaction N(2)-formyl-N(1)-(5-phospho-beta-D-ribosyl)glycinamide + L-glutamine + ATP + H2O = 2-formamido-N(1)-(5-O-phospho-beta-D-ribosyl)acetamidine + L-glutamate + ADP + phosphate + H(+). The protein operates within purine metabolism; IMP biosynthesis via de novo pathway; 5-amino-1-(5-phospho-D-ribosyl)imidazole from N(2)-formyl-N(1)-(5-phospho-D-ribosyl)glycinamide: step 1/2. Part of the phosphoribosylformylglycinamidine synthase complex involved in the purines biosynthetic pathway. Catalyzes the ATP-dependent conversion of formylglycinamide ribonucleotide (FGAR) and glutamine to yield formylglycinamidine ribonucleotide (FGAM) and glutamate. The FGAM synthase complex is composed of three subunits. PurQ produces an ammonia molecule by converting glutamine to glutamate. PurL transfers the ammonia molecule to FGAR to form FGAM in an ATP-dependent manner. PurS interacts with PurQ and PurL and is thought to assist in the transfer of the ammonia molecule from PurQ to PurL. This Prochlorococcus marinus (strain MIT 9312) protein is Phosphoribosylformylglycinamidine synthase subunit PurL.